The following is a 228-amino-acid chain: Ribosomal RNA small subunit methyltransferase G (228 aa).

Residues Gly-89, Leu-94, 140-141, and Arg-159 contribute to the S-adenosyl-L-methionine site; that span reads VE.

This sequence belongs to the methyltransferase superfamily. RNA methyltransferase RsmG family.

The protein localises to the cytoplasm. It carries out the reaction guanosine(527) in 16S rRNA + S-adenosyl-L-methionine = N(7)-methylguanosine(527) in 16S rRNA + S-adenosyl-L-homocysteine. Its function is as follows. Specifically methylates the N7 position of guanine in position 527 of 16S rRNA. The protein is Ribosomal RNA small subunit methyltransferase G of Burkholderia ambifaria (strain MC40-6).